The primary structure comprises 214 residues: Transcription factor MYB24 (214 aa).

HTH myb-type domains follow at residues 14 to 66 (DAEV…LNYL) and 67 to 121 (RPDV…QKYI). 2 DNA-binding regions (H-T-H motif) span residues 42-66 (WNSL…LNYL) and 94-117 (WSKI…RTKI).

Interacts (via N-terminus) with TIFY10A/JAZ1, TIFY5A/JAZ8 AND TIFY3A/JAZ11. As to expression, expressed specifically in flowers. Expressed in all four whorls of the flower and in the vascular tissue of stamen filament and sepals. Detected in male and female gametophytes, especially in microspores and ovules. Weakly expressed in petals and the upper part of pistils.

The protein localises to the nucleus. Its function is as follows. Transcription factor acting redundantly with MYB21 and MYB57 to control stamen filament elongation in the late developed flowers. Contributes with MYB21 to induction of MYB108 by jasmonate. Repressed at the transcript levels by DELLA proteins. The polypeptide is Transcription factor MYB24 (MYB24) (Arabidopsis thaliana (Mouse-ear cress)).